A 98-amino-acid chain; its full sequence is NADH-ubiquinone oxidoreductase chain 4L (98 aa).

Transmembrane regions (helical) follow at residues 2–22, 29–49, and 61–81; these read PSIFTNIILAFATALLGTLVF, SLLCLEGMMLSLFTLSTLIIL, and ILLLVFAACEAAIGLALLVMV.

Belongs to the complex I subunit 4L family. As to quaternary structure, core subunit of respiratory chain NADH dehydrogenase (Complex I) which is composed of 45 different subunits.

The protein resides in the mitochondrion inner membrane. It carries out the reaction a ubiquinone + NADH + 5 H(+)(in) = a ubiquinol + NAD(+) + 4 H(+)(out). Its function is as follows. Core subunit of the mitochondrial membrane respiratory chain NADH dehydrogenase (Complex I) which catalyzes electron transfer from NADH through the respiratory chain, using ubiquinone as an electron acceptor. Part of the enzyme membrane arm which is embedded in the lipid bilayer and involved in proton translocation. The sequence is that of NADH-ubiquinone oxidoreductase chain 4L (MT-ND4L) from Avahi laniger (Eastern woolly lemur).